The chain runs to 155 residues: Protein E6 (155 aa).

Zinc fingers lie at residues 33–69 and 106–142; these read CVYCKKELTRAEVYNFACTELKLVYRDDFPYAVCRVC and CYRCQSPLTPEEKQLHCDRKRRFHLIAHGWTGSCLGC.

This sequence belongs to the papillomaviridae E6 protein family. As to quaternary structure, forms homodimers. Interacts with ubiquitin-protein ligase UBE3A/E6-AP; this interaction stimulates UBE3A ubiquitin activity. Interacts with host TP53 and EP300; this interaction inhibits TP53 activity.

It is found in the host cytoplasm. Its subcellular location is the host nucleus. This protein has transforming activity in vitro. Its function is as follows. Plays a major role in the induction and maintenance of cellular transformation. E6 associates with host UBE3A/E6-AP ubiquitin-protein ligase and modulates its activity. Sequesters tumor suppressor TP53 in the host cytoplasm and modulates its activity by interacting with host EP300 that results in the reduction of TP53 acetylation and activation. In turn, apoptosis induced by DNA damage is inhibited. E6 also protects host keratinocytes from apoptosis by mediating the degradation of host BAK1. May also inhibit host immune response. The polypeptide is Protein E6 (Human papillomavirus 56).